The primary structure comprises 693 residues: TGF-beta-activated kinase 1 and MAP3K7-binding protein 2 (693 aa).

The region spanning 8–51 (IDFQVLHDLRQKFPEVPEVVVSRCMLQNNNNLDACCAVLSQEST) is the CUE domain. A disordered region spans residues 90 to 171 (HGREGSRVNG…KGTSNLSQQT (82 aa)). 3 stretches are compositionally biased toward polar residues: residues 97–130 (VNGSRTLTHSVSDGQLHGGQSNNELFQQEPQTAP), 143–153 (PSTSGASNSTP), and 162–171 (KGTSNLSQQT). Arg173 carries the asymmetric dimethylarginine modification. Positions 223-282 (SGTARQTQQHSGWVSQFNPMNPQQAYQPSQPGPWTTYPASNPLPHTSTQQPNQQGHQTSH) are enriched in polar residues. A disordered region spans residues 223–310 (SGTARQTQQH…SGSSQSSAHS (88 aa)). Low complexity predominate over residues 286 to 310 (PISSPTTPQPPTIHSSGSSQSSAHS). Lys329 is covalently cross-linked (Glycyl lysine isopeptide (Lys-Gly) (interchain with G-Cter in SUMO)). The tract at residues 330 to 380 (LEPPQRNSSSKLRSSGPRTASTSSLVNSQTLNRNQPTVYIAASPPNTDEMI) is disordered. A compositionally biased stretch (polar residues) spans 334-366 (QRNSSSKLRSSGPRTASTSSLVNSQTLNRNQPT). Ser372, Ser450, Ser482, and Ser524 each carry phosphoserine. Residues 532 to 619 (YTQALLVHQK…TKEIDLFQAR (88 aa)) are a coiled coil. Residue Lys562 forms a Glycyl lysine isopeptide (Lys-Gly) (interchain with G-Cter in SUMO) linkage. Ser582 is subject to Phosphoserine. Residue Lys611 forms a Glycyl lysine isopeptide (Lys-Gly) (interchain with G-Cter in ubiquitin) linkage. The segment at 640-663 (PVPPKPKDQRSTIKAPKTQDAEDE) is disordered. A RanBP2-type zinc finger spans residues 663–693 (EEGAQWNCTACTFLNHPALIRCEQCEMPRHF). An interaction with polyubiquitin region spans residues 675–685 (FLNHPALIRCE).

Interacts with MAP3K7 and TRAF6. Identified in the TRIKA2 complex composed of MAP3K7, TAB1 and TAB2. Binds 'Lys-63'-linked polyubiquitin chains. Interacts with NCOR1 and HDAC3 to form a ternary complex. Interacts (via C-terminal) with NUMBL (via PTB domain). Interacts (via the C-terminus) with DYNC2I2 (via WD domains). Interacts with RBCK1. Interacts with TRIM5. Interacts with TRIM38 (via B30.2/SPRY domain), leading to its translocation to lysosomes and degradation. Interacts with ASB1; this interaction promotes TAB2 stability. In terms of processing, SUMOylated by TRIM60; leading to inhibition of MAPK/NF-kappaB activation and the innate immune response. Ubiquitinated; following IL1 stimulation or TRAF6 overexpression. Ubiquitination involves RBCK1 leading to proteasomal degradation. Ubiquitinated at Lys-611 by TRIM45 leading to proteasomal degradation. Post-translationally, degraded in a lysosome-dependent manner following interaction with TRIM38. In terms of processing, phosphorylated. In terms of tissue distribution, widely expressed.

It is found in the membrane. The protein resides in the endosome membrane. The protein localises to the lysosome membrane. It localises to the cytoplasm. Its subcellular location is the cytosol. It is found in the nucleus. Adapter required to activate the JNK and NF-kappa-B signaling pathways through the specific recognition of 'Lys-63'-linked polyubiquitin chains by its RanBP2-type zinc finger (NZF). Acts as an adapter linking MAP3K7/TAK1 and TRAF6 to 'Lys-63'-linked polyubiquitin chains. The RanBP2-type zinc finger (NZF) specifically recognizes Lys-63'-linked polyubiquitin chains unanchored or anchored to the substrate proteins such as RIPK1/RIP1 and RIPK2: this acts as a scaffold to organize a large signaling complex to promote autophosphorylation of MAP3K7/TAK1, and subsequent activation of I-kappa-B-kinase (IKK) core complex by MAP3K7/TAK1. Also recognizes and binds Lys-63'-linked polyubiquitin chains of heterotypic 'Lys-63'-/'Lys-48'-linked branched ubiquitin chains. Regulates the IL1-mediated translocation of NCOR1 out of the nucleus. Involved in heart development. The polypeptide is TGF-beta-activated kinase 1 and MAP3K7-binding protein 2 (Tab2) (Mus musculus (Mouse)).